Here is a 467-residue protein sequence, read N- to C-terminus: tRNA-2-methylthio-N(6)-dimethylallyladenosine synthase (467 aa).

The MTTase N-terminal domain occupies 2–118; the sequence is PSVFIKTFGC…VAEIADNLLK (117 aa). [4Fe-4S] cluster-binding residues include cysteine 11, cysteine 47, cysteine 81, cysteine 159, cysteine 163, and cysteine 166. The Radical SAM core domain maps to 145–379; that stretch reads TKAQPIAYVS…LEIQNKITME (235 aa). Residues 382-445 enclose the TRAM domain; sequence QKWVGQVVEI…GHTFYGTPLI (64 aa).

Belongs to the methylthiotransferase family. MiaB subfamily. As to quaternary structure, monomer. Requires [4Fe-4S] cluster as cofactor.

It is found in the cytoplasm. It carries out the reaction N(6)-dimethylallyladenosine(37) in tRNA + (sulfur carrier)-SH + AH2 + 2 S-adenosyl-L-methionine = 2-methylsulfanyl-N(6)-dimethylallyladenosine(37) in tRNA + (sulfur carrier)-H + 5'-deoxyadenosine + L-methionine + A + S-adenosyl-L-homocysteine + 2 H(+). Catalyzes the methylthiolation of N6-(dimethylallyl)adenosine (i(6)A), leading to the formation of 2-methylthio-N6-(dimethylallyl)adenosine (ms(2)i(6)A) at position 37 in tRNAs that read codons beginning with uridine. This Methylacidiphilum infernorum (isolate V4) (Methylokorus infernorum (strain V4)) protein is tRNA-2-methylthio-N(6)-dimethylallyladenosine synthase.